Reading from the N-terminus, the 307-residue chain is Estrogen receptor (307 aa).

Residues 1–43 (GHNDYMCPATNQCTIDKNRRKSCQACRLRKCYEVGMMKGGIRK) constitute a DNA-binding region (nuclear receptor). The segment at 7 to 31 (CPATNQCTIDKNRRKSCQACRLRKC) adopts an NR C4-type zinc-finger fold. Positions 44-95 (DRRGGRILKHKRQREEHDNRNAGAIVERRSPNLWPSPLMITHNKKNSPALSL) are hinge. The NR LBD domain maps to 96–307 (TADQIVSALL…HFRHMSNKGM (212 aa)).

Belongs to the nuclear hormone receptor family. NR3 subfamily. In terms of assembly, binds DNA as a homodimer. Can form a heterodimer with ER-beta.

The protein localises to the nucleus. In terms of biological role, the steroid hormones and their receptors are involved in the regulation of eukaryotic gene expression and affect cellular proliferation and differentiation in target tissues. This is Estrogen receptor (ESR1) from Aspidoscelis uniparens (Desert grassland whiptail lizard).